Consider the following 309-residue polypeptide: HTH-type transcriptional activator AaeR (309 aa).

The region spanning 1 to 59 is the HTH lysR-type domain; that stretch reads MERLKRMSVFAKVVEFGSFTAAARQLQMSVSSISQTVSKLEDELQVKLLNRSTRSIGLT. A DNA-binding region (H-T-H motif) is located at residues 19 to 38; that stretch reads FTAAARQLQMSVSSISQTVS.

This sequence belongs to the LysR transcriptional regulatory family.

Its activity is regulated as follows. Activity is regulated by p-hydroxybenzoic acid. Functionally, transcriptional regulator that activates expression of the aaeXAB operon, which is involved in the efflux of aromatic carboxylic acids such as p-hydroxybenzoic acid (pHBA). In the presence of the effector pHBA, acts by binding to a single target within the aaeXAB-aaeR intergenic region. In the absence of pHBA, binds more than 50 sites along the E.coli K12 genome, including genes related to biofilm formation and several genes involved in stress response, suggesting that it might play a role in quorum sensing in the absence of pHBA. In Escherichia coli (strain K12), this protein is HTH-type transcriptional activator AaeR.